We begin with the raw amino-acid sequence, 923 residues long: ATP-dependent Clp protease ATP-binding subunit ClpA homolog CD4B, chloroplastic (923 aa).

Residues phenylalanine 92–glutamate 234 enclose the Clp R domain. Repeat stretches follow at residues phenylalanine 95 to glycine 160 and phenylalanine 170 to glutamate 234. An i region spans residues leucine 255–proline 502. Residue glycine 300 to threonine 307 participates in ATP binding. Residues glutamate 509–glutamine 544 enclose the UVR domain. The tract at residues valine 569–serine 760 is II. Glycine 643 to serine 650 is a binding site for ATP.

The protein belongs to the ClpA/ClpB family.

The protein resides in the plastid. Its subcellular location is the chloroplast. Its function is as follows. May interact with a ClpP-like protease involved in degradation of denatured proteins in the chloroplast. The polypeptide is ATP-dependent Clp protease ATP-binding subunit ClpA homolog CD4B, chloroplastic (CD4B) (Solanum lycopersicum (Tomato)).